A 75-amino-acid polypeptide reads, in one-letter code: UPF0352 protein ETA_12580 (75 aa).

Belongs to the UPF0352 family.

The protein is UPF0352 protein ETA_12580 of Erwinia tasmaniensis (strain DSM 17950 / CFBP 7177 / CIP 109463 / NCPPB 4357 / Et1/99).